Reading from the N-terminus, the 158-residue chain is 2-C-methyl-D-erythritol 2,4-cyclodiphosphate synthase (158 aa).

The a divalent metal cation site is built by aspartate 8 and histidine 10. Residues 8–10 (DVH) and 34–35 (HS) each bind 4-CDP-2-C-methyl-D-erythritol 2-phosphate. An a divalent metal cation-binding site is contributed by histidine 42. Residues 56–58 (DIG), 61–65 (FPDTD), 100–106 (AQRPKMA), 132–135 (TTEE), phenylalanine 139, and arginine 142 each bind 4-CDP-2-C-methyl-D-erythritol 2-phosphate.

Belongs to the IspF family. As to quaternary structure, homotrimer. A divalent metal cation is required as a cofactor.

The catalysed reaction is 4-CDP-2-C-methyl-D-erythritol 2-phosphate = 2-C-methyl-D-erythritol 2,4-cyclic diphosphate + CMP. It functions in the pathway isoprenoid biosynthesis; isopentenyl diphosphate biosynthesis via DXP pathway; isopentenyl diphosphate from 1-deoxy-D-xylulose 5-phosphate: step 4/6. Its function is as follows. Involved in the biosynthesis of isopentenyl diphosphate (IPP) and dimethylallyl diphosphate (DMAPP), two major building blocks of isoprenoid compounds. Catalyzes the conversion of 4-diphosphocytidyl-2-C-methyl-D-erythritol 2-phosphate (CDP-ME2P) to 2-C-methyl-D-erythritol 2,4-cyclodiphosphate (ME-CPP) with a corresponding release of cytidine 5-monophosphate (CMP). The protein is 2-C-methyl-D-erythritol 2,4-cyclodiphosphate synthase of Pelobacter propionicus (strain DSM 2379 / NBRC 103807 / OttBd1).